Reading from the N-terminus, the 310-residue chain is 26S proteasome non-ATPase regulatory subunit 7 homolog B (310 aa).

Met-1 carries the post-translational modification N-acetylmethionine. In terms of domain architecture, MPN spans 17–154 (VIVHPLVLLS…YYAVEEVKEN (138 aa)).

It belongs to the peptidase M67A family. As to quaternary structure, component of the 19S regulatory particle (RP/PA700) lid subcomplex of the 26S proteasome. The 26S proteasome is composed of a core protease (CP), known as the 20S proteasome, capped at one or both ends by the 19S regulatory particle (RP/PA700). The RP/PA700 complex is composed of at least 17 different subunits in two subcomplexes, the base and the lid, which form the portions proximal and distal to the 20S proteolytic core, respectively.

Its function is as follows. Acts as a regulatory subunit of the 26S proteasome which is involved in the ATP-dependent degradation of ubiquitinated proteins. This chain is 26S proteasome non-ATPase regulatory subunit 7 homolog B (RPN8B), found in Arabidopsis thaliana (Mouse-ear cress).